An 88-amino-acid chain; its full sequence is UPF0213 protein EF_2693 (88 aa).

Residues 5-82 (KSHYFYVLLC…KKLTRKQKEQ (78 aa)) enclose the GIY-YIG domain.

This sequence belongs to the UPF0213 family.

The polypeptide is UPF0213 protein EF_2693 (Enterococcus faecalis (strain ATCC 700802 / V583)).